Here is a 476-residue protein sequence, read N- to C-terminus: DnaJ protein P58IPK homolog A (476 aa).

The N-terminal stretch at 1–28 (MVAMARWPWRVLLPLLLLHSSPVFFVFA) is a signal peptide. TPR repeat units lie at residues 36–69 (PSTL…EPNH), 70–103 (SEAY…KPGS), 116–150 (AQNA…SPDC), 152–184 (KAKL…DEDN), 185–218 (LDAL…DPEH), 231–264 (LVKK…DPDH), 269–302 (VHLY…DGEL), and 304–336 (DALT…SPQD). The 67-residue stretch at 357–423 (DWYKILGISK…DKRVRYDRGE (67 aa)) folds into the J domain.

Interacts with BIP1.

Its subcellular location is the endoplasmic reticulum lumen. Functionally, may play a role in protein folding in the endoplasmic reticulum. The chain is DnaJ protein P58IPK homolog A from Oryza sativa subsp. japonica (Rice).